The chain runs to 315 residues: Olfactory receptor 2V2 (315 aa).

At 1 to 26 (METWVNQSYTDGFFLLGIFSHSTADL) the chain is on the extracellular side. N6 carries an N-linked (GlcNAc...) asparagine glycan. Residues 27–50 (VLFSVVMAVFTVALCGNVLLIFLI) form a helical membrane-spanning segment. The Cytoplasmic portion of the chain corresponds to 51-58 (YMDPHLHT). Residues 59–80 (PMYFFLSQLSLMDLMLVCTNVP) form a helical membrane-spanning segment. The Extracellular segment spans residues 81–101 (KMAANFLSGRKSISFVGCGIQ). A disulfide bridge links C98 with C190. The chain crosses the membrane as a helical span at residues 102 to 121 (IGLFVCLVGSEGLLLGLMAY). Topologically, residues 122–140 (DRYVAISHPLHYPILMNQR) are cytoplasmic. A helical membrane pass occupies residues 141–159 (VCLQITGSSWAFGIIDGLI). At 160-196 (QMVVVMNFPYCGLRKVNHFFCEMLSLLKLACVDTSLF) the chain is on the extracellular side. The chain crosses the membrane as a helical span at residues 197–220 (EKVIFACCVFMLLFPFSIIVASYA). Residues 221-237 (HILGTVLQMHSAQAWKK) lie on the Cytoplasmic side of the membrane. A helical transmembrane segment spans residues 238-260 (ALATCSSHLTAVTLFYGAAMFIY). The Extracellular segment spans residues 261–273 (LRPRHYRAPSHDK). The helical transmembrane segment at 274–293 (VASIFYTVLTPMLNPLIYSL) threads the bilayer. Over 294–315 (RNREVMGALRKGLDRCRIGSQH) the chain is Cytoplasmic.

This sequence belongs to the G-protein coupled receptor 1 family.

The protein localises to the cell membrane. Its function is as follows. Odorant receptor. This is Olfactory receptor 2V2 (OR2V2) from Homo sapiens (Human).